The sequence spans 89 residues: Small ribosomal subunit protein uS15 (89 aa).

The protein belongs to the universal ribosomal protein uS15 family. In terms of assembly, part of the 30S ribosomal subunit. Forms a bridge to the 50S subunit in the 70S ribosome, contacting the 23S rRNA.

In terms of biological role, one of the primary rRNA binding proteins, it binds directly to 16S rRNA where it helps nucleate assembly of the platform of the 30S subunit by binding and bridging several RNA helices of the 16S rRNA. Functionally, forms an intersubunit bridge (bridge B4) with the 23S rRNA of the 50S subunit in the ribosome. In Polynucleobacter necessarius subsp. necessarius (strain STIR1), this protein is Small ribosomal subunit protein uS15.